A 221-amino-acid polypeptide reads, in one-letter code: Small ribosomal subunit protein eS8 (221 aa).

Disordered regions lie at residues 1–41 (MGIS…LSSN) and 128–169 (TPAA…TLDP). Residues 8-26 (MHKRRATGGKQKAWRKKRK) show a composition bias toward basic residues. Residues 146–169 (EETKKSNHVTRKLEKRKEGRTLDP) are compositionally biased toward basic and acidic residues.

It belongs to the eukaryotic ribosomal protein eS8 family.

The chain is Small ribosomal subunit protein eS8 (RPS8) from Zea mays (Maize).